Here is a 95-residue protein sequence, read N- to C-terminus: Co-chaperonin GroES (95 aa).

This sequence belongs to the GroES chaperonin family. Heptamer of 7 subunits arranged in a ring. Interacts with the chaperonin GroEL.

The protein resides in the cytoplasm. Functionally, together with the chaperonin GroEL, plays an essential role in assisting protein folding. The GroEL-GroES system forms a nano-cage that allows encapsulation of the non-native substrate proteins and provides a physical environment optimized to promote and accelerate protein folding. GroES binds to the apical surface of the GroEL ring, thereby capping the opening of the GroEL channel. The protein is Co-chaperonin GroES of Desulfosudis oleivorans (strain DSM 6200 / JCM 39069 / Hxd3) (Desulfococcus oleovorans).